A 607-amino-acid chain; its full sequence is Pescadillo homolog (607 aa).

The tract at residues 301 to 341 is disordered; the sequence is ANVVEQSEKTTEDADEEPETEENLDEFKPADGADNEDSKSL. The segment covering 313-324 has biased composition (acidic residues); it reads DADEEPETEENL. Residues 325–339 show a composition bias toward basic and acidic residues; that stretch reads DEFKPADGADNEDSK. Residues 348-441 form the BRCT domain; that stretch reads SNTSLFSNFT…ILERTDLYAC (94 aa). Positions 497-604 form a coiled coil; the sequence is ENVEQIDDAE…RDIEKRKKLK (108 aa). The disordered stretch occupies residues 531–607; that stretch reads QNSKSAKKTK…EKRKKLKVEN (77 aa). 2 stretches are compositionally biased toward basic and acidic residues: residues 544–561 and 595–607; these read RDTLTAEEKEEKEAKELS and RDIEKRKKLKVEN.

This sequence belongs to the pescadillo family. As to quaternary structure, component of the NOP7 complex, composed of erb1/SPBC4F6.13c, ppp1/SPBC19F5.05c and ytm1/SPAC890.04c. Within the NOP7 complex erb1/SPBC4F6.13c appears to interact directly with ppp1/SPBC19F5.05c and ytm1/SPAC890.04c. The NOP7 complex also associates with the 66S pre-ribosome.

The protein resides in the nucleus. It localises to the nucleoplasm. It is found in the nucleolus. Functionally, component of the NOP7 complex, which is required for maturation of the 25S and 5.8S ribosomal RNAs and formation of the 60S ribosome. The protein is Pescadillo homolog (ppp1) of Schizosaccharomyces pombe (strain 972 / ATCC 24843) (Fission yeast).